The chain runs to 387 residues: ATP phosphoribosyltransferase regulatory subunit (387 aa).

Belongs to the class-II aminoacyl-tRNA synthetase family. HisZ subfamily. As to quaternary structure, heteromultimer composed of HisG and HisZ subunits.

The protein resides in the cytoplasm. Its pathway is amino-acid biosynthesis; L-histidine biosynthesis; L-histidine from 5-phospho-alpha-D-ribose 1-diphosphate: step 1/9. Required for the first step of histidine biosynthesis. May allow the feedback regulation of ATP phosphoribosyltransferase activity by histidine. The chain is ATP phosphoribosyltransferase regulatory subunit from Ralstonia pickettii (strain 12J).